Consider the following 83-residue polypeptide: Protein ShK-like4 (83 aa).

Positions 1–21 are cleaved as a signal peptide; that stretch reads MDTRVIAVLFVAIMVLSSTNA. Residues 22–48 constitute a propeptide that is removed on maturation; that stretch reads LPKQKGSYKNMNHADFLKGLDRASSKR. Cystine bridges form between Cys50-Cys82, Cys57-Cys75, and Cys67-Cys79. The 34-residue stretch at 50–83 folds into the ShKT domain; it reads CRDSHWSCFFQSNYEDICSTAQAEECALSCGLCE.

In terms of processing, contains 3 disulfide bonds. As to expression, expressed in various neurons (ectodermal sensory cells) (in planulae and primary polyps). Not expressed in nematocytes.

Functionally, probable neuropeptide. The chain is Protein ShK-like4 from Nematostella vectensis (Starlet sea anemone).